Here is a 591-residue protein sequence, read N- to C-terminus: CTP synthase (591 aa).

The interval 1-281 (MPQSRTHSRT…DAYVVRQLGL (281 aa)) is amidoligase domain. Residue serine 23 participates in CTP binding. Serine 23 lines the UTP pocket. Residues 24 to 29 (SLGKGL) and aspartate 81 each bind ATP. Mg(2+)-binding residues include aspartate 81 and glutamate 155. Residues 162-164 (DIE), 202-207 (KTKPTQ), and lysine 238 each bind CTP. UTP is bound by residues 202–207 (KTKPTQ) and lysine 238. Residues 306–554 (RIALVGKYVD…VDAALKHKLE (249 aa)) enclose the Glutamine amidotransferase type-1 domain. An L-glutamine-binding site is contributed by glycine 369. Catalysis depends on cysteine 396, which acts as the Nucleophile; for glutamine hydrolysis. L-glutamine contacts are provided by residues 397–400 (LGLQ), glutamate 419, and arginine 480. Residues histidine 527 and glutamate 529 contribute to the active site. The segment at 568-591 (AVATDDELADSADRDEVASVDSAG) is disordered.

This sequence belongs to the CTP synthase family. Homotetramer.

The catalysed reaction is UTP + L-glutamine + ATP + H2O = CTP + L-glutamate + ADP + phosphate + 2 H(+). It carries out the reaction L-glutamine + H2O = L-glutamate + NH4(+). It catalyses the reaction UTP + NH4(+) + ATP = CTP + ADP + phosphate + 2 H(+). Its pathway is pyrimidine metabolism; CTP biosynthesis via de novo pathway; CTP from UDP: step 2/2. Its activity is regulated as follows. Allosterically activated by GTP, when glutamine is the substrate; GTP has no effect on the reaction when ammonia is the substrate. The allosteric effector GTP functions by stabilizing the protein conformation that binds the tetrahedral intermediate(s) formed during glutamine hydrolysis. Inhibited by the product CTP, via allosteric rather than competitive inhibition. Its function is as follows. Catalyzes the ATP-dependent amination of UTP to CTP with either L-glutamine or ammonia as the source of nitrogen. Regulates intracellular CTP levels through interactions with the four ribonucleotide triphosphates. The polypeptide is CTP synthase (Rhodococcus jostii (strain RHA1)).